The sequence spans 157 residues: Ribosomal RNA large subunit methyltransferase H (157 aa).

Residues leucine 73, glycine 104, and 123-128 each bind S-adenosyl-L-methionine; that span reads LGPLTL.

This sequence belongs to the RNA methyltransferase RlmH family. Homodimer.

The protein localises to the cytoplasm. It catalyses the reaction pseudouridine(1915) in 23S rRNA + S-adenosyl-L-methionine = N(3)-methylpseudouridine(1915) in 23S rRNA + S-adenosyl-L-homocysteine + H(+). Specifically methylates the pseudouridine at position 1915 (m3Psi1915) in 23S rRNA. In Xylella fastidiosa (strain M12), this protein is Ribosomal RNA large subunit methyltransferase H.